The chain runs to 992 residues: MKGLGDSRPRHLSDSLDPPHEPLFAGPDRNPYLLSPTEAFAREARFPGQNTLPGDGLFPLNNQLPPPSSTFPRIHYNSHFEVPEESPFPSHAQATKINRLPANLLDQFEKQLPIHRDGFSTLQFPRGEAKARGESPGRIRHLVHSVQRLFFTKAPSMEGTTGKVGGNGGKKGVLEDGKGRRAKSKERAKAGEPKRRSRSNISGWWSSDDNLDGEGGAFRSGPASGLMTLGRQPERTQPRYFMHAYNTISGHMLKTTKNTTTELTAPPPPPAPPATCPSLGVGTDTNYVKRGSWSTLTLSHAHEVCQKTSATLDKSLLKSKSCHQGLAYHYLQVPGGGGEWSTTLLSPRDMDSTAEGPIPCRRMRSGSYIKAMGDEDSDESGGGSPKPSPKTAARRQSYLRATQQSLGEQSNPRRSLDRLDSVDMPLPSKYPSWEEDYNPISDSLNDSGCISQVFGQASLIPQLFGHDQQVREADLSDQYEAACESACSEAESTAAEALDLSLPSYFRSRSHSYLRAIQAGCSQEEDSVSLQSLSPPPSTGSLSNSRTLPSSSCLVAYKKTPPPVPPRTTSKPFISVTVQSSTESAQDTYLDSQDHKSEVTSQSGLSNSSDSLDSSTRPPSVTRGGITPGPEAPEPPPKHAALKSEHGTLTSSESHSEAVPKRKLSSIGIQVDCIQPVPKEEPSPATKFQSIGVQVEDDWRSSAPSHSMSSRRDTDSDTQDANDSSCKSSERSLPDCTSHPNSISIDAGPRQAPKIAQIKRNLSYGDNSDPALEASSLPPPDPWMETSSSSPAEPAQPGACRRDGYWFLKLLQAETERLEGWCCQMDKETKENNLSEEVLGKVLSAVGSAQLLMSQKFQQFRGICEQNLNPDANPRPTAQDLAGFWDLLQLSIEDISMKFDELYHLKANSWQLVETPEKRKEEKKPPPPVPKKPAKSKAAVSRDKASDAGDKQRQEARKRLLAAKRAASVRQNSATESADSIEIYVPEAQTRL.

Residues 1–20 are compositionally biased toward basic and acidic residues; the sequence is MKGLGDSRPRHLSDSLDPPH. Disordered stretches follow at residues 1–31 and 154–226; these read MKGL…DRNP and APSM…ASGL. Gly residues predominate over residues 162–171; the sequence is GKVGGNGGKK. Positions 172–194 are enriched in basic and acidic residues; the sequence is GVLEDGKGRRAKSKERAKAGEPK. Residues 199-208 show a composition bias toward polar residues; sequence SNISGWWSSD. Residues S206 and S207 each carry the phosphoserine modification. The residue at position 290 (R290) is an Omega-N-methylarginine. Disordered regions lie at residues 342–435, 527–665, 677–751, 763–798, and 915–992; these read TTLL…SWEE, SVSL…RKLS, VPKE…GPRQ, SYGD…AQPG, and TPEK…QTRL. Phosphoserine occurs at positions 377, 380, 384, 388, 405, 415, and 421. Polar residues predominate over residues 399–413; the sequence is LRATQQSLGEQSNPR. Over residues 528–554 the composition is skewed to low complexity; the sequence is VSLQSLSPPPSTGSLSNSRTLPSSSCL. A compositionally biased stretch (polar residues) spans 576 to 591; it reads VTVQSSTESAQDTYLD. Residues S580, S581, S609, S611, S665, and S744 each carry the phosphoserine modification. Residues 600 to 620 are compositionally biased toward low complexity; it reads TSQSGLSNSSDSLDSSTRPPS. At T915 the chain carries Phosphothreonine. Composition is skewed to basic and acidic residues over residues 915 to 925 and 940 to 958; these read TPEKRKEEKKP and VSRD…EARK. Residues 969-978 show a composition bias toward polar residues; that stretch reads VRQNSATESA. Position 973 is a phosphoserine (S973).

The protein belongs to the SAPAP family. In terms of assembly, interacts with DLG1 and DLG4/PSD-95. As to expression, expressed in brain.

Its subcellular location is the membrane. Its function is as follows. May play a role in the molecular organization of synapses and neuronal cell signaling. Could be an adapter protein linking ion channel to the subsynaptic cytoskeleton. May induce enrichment of PSD-95/SAP90 at the plasma membrane. The polypeptide is Disks large-associated protein 4 (Dlgap4) (Rattus norvegicus (Rat)).